The sequence spans 359 residues: Chondroadherin (359 aa).

The signal sequence occupies residues 1 to 22; the sequence is MVRPMLLLSLGLLAGLLPALAA. Cys23 and Cys38 form a disulfide bridge. Residues 23–52 enclose the LRRNT domain; that stretch reads CPQNCHCHSDLQHVICDKVGLQKIPKVSEK. LRR repeat units follow at residues 76–97, 100–121, 124–145, 148–169, 172–193, 196–217, 220–241, 245–266, and 269–290; these read NLVS…AFRG, QLIY…AFDD, ELTY…LLSP, NLFI…AFQG, DLRW…ALDD, NLAK…ALSK, VVEE…AFQS, YLET…AFLG, and TLKH…FPFD. Ser144 carries O-linked (GalNAc...) serine glycosylation. The region spanning 300-348 is the LRRCT domain; it reads NPWKCTCQLRGLRRWLEAKASRPDATCASPAKFKGQHIRDTDAFRSCKF. 2 cysteine pairs are disulfide-bonded: Cys304/Cys346 and Cys306/Cys326.

It belongs to the small leucine-rich proteoglycan (SLRP) family. SLRP class IV subfamily. In terms of assembly, mostly monomeric. Interacts with collagen type II. Present in chondrocytes at all ages.

The protein resides in the secreted. It is found in the extracellular space. The protein localises to the extracellular matrix. Functionally, promotes attachment of chondrocytes, fibroblasts, and osteoblasts. This binding is mediated (at least for chondrocytes and fibroblasts) by the integrin alpha(2)beta(1). May play an important role in the regulation of chondrocyte growth and proliferation. This chain is Chondroadherin (CHAD), found in Homo sapiens (Human).